The following is a 446-amino-acid chain: tRNA (guanine-N(7)-)-methyltransferase non-catalytic subunit TRM82 (446 aa).

A disordered region spans residues Leu67–Lys97. The segment covering Ser87–Lys97 has biased composition (low complexity). WD repeat units lie at residues Pro107–Cys147, Gly202–His243, and Gly247–Lys287.

It belongs to the WD repeat TRM82 family. Forms a heterodimer with the catalytic subunit TRM8.

The protein resides in the nucleus. Its pathway is tRNA modification; N(7)-methylguanine-tRNA biosynthesis. Its function is as follows. Required for the formation of N(7)-methylguanine at position 46 (m7G46) in tRNA. In the complex, it is required to stabilize and induce conformational changes of the catalytic subunit. In Debaryomyces hansenii (strain ATCC 36239 / CBS 767 / BCRC 21394 / JCM 1990 / NBRC 0083 / IGC 2968) (Yeast), this protein is tRNA (guanine-N(7)-)-methyltransferase non-catalytic subunit TRM82.